The following is a 154-amino-acid chain: Myoglobin (154 aa).

A Globin domain is found at 2-148 (GLSDGEWQLV…FRKDIAAKYK (147 aa)). Position 4 is a phosphoserine (serine 4). Histidine 65 serves as a coordination point for nitrite. Residue histidine 65 coordinates O2. Threonine 68 is subject to Phosphothreonine. Histidine 94 is a binding site for heme b.

Belongs to the globin family. As to quaternary structure, monomeric.

Its subcellular location is the cytoplasm. The protein localises to the sarcoplasm. It carries out the reaction Fe(III)-heme b-[protein] + nitric oxide + H2O = Fe(II)-heme b-[protein] + nitrite + 2 H(+). It catalyses the reaction H2O2 + AH2 = A + 2 H2O. Monomeric heme protein which primary function is to store oxygen and facilitate its diffusion within muscle tissues. Reversibly binds oxygen through a pentacoordinated heme iron and enables its timely and efficient release as needed during periods of heightened demand. Depending on the oxidative conditions of tissues and cells, and in addition to its ability to bind oxygen, it also has a nitrite reductase activity whereby it regulates the production of bioactive nitric oxide. Under stress conditions, like hypoxia and anoxia, it also protects cells against reactive oxygen species thanks to its pseudoperoxidase activity. This chain is Myoglobin (MB), found in Globicephala melas (Long-finned pilot whale).